Consider the following 702-residue polypeptide: Ribosomal RNA large subunit methyltransferase K/L (702 aa).

The 112-residue stretch at 43-154 (LVYQSLMWSR…KETASIALDL (112 aa)) folds into the THUMP domain.

Belongs to the methyltransferase superfamily. RlmKL family.

It is found in the cytoplasm. The catalysed reaction is guanosine(2445) in 23S rRNA + S-adenosyl-L-methionine = N(2)-methylguanosine(2445) in 23S rRNA + S-adenosyl-L-homocysteine + H(+). It carries out the reaction guanosine(2069) in 23S rRNA + S-adenosyl-L-methionine = N(2)-methylguanosine(2069) in 23S rRNA + S-adenosyl-L-homocysteine + H(+). In terms of biological role, specifically methylates the guanine in position 2445 (m2G2445) and the guanine in position 2069 (m7G2069) of 23S rRNA. This chain is Ribosomal RNA large subunit methyltransferase K/L, found in Escherichia coli O139:H28 (strain E24377A / ETEC).